Here is a 385-residue protein sequence, read N- to C-terminus: tRNA-specific 2-thiouridylase MnmA (385 aa).

Residues 29–36 (GLSGGVDS) and Leu-55 each bind ATP. The active-site Nucleophile is Cys-116. Cys-116 and Cys-225 are oxidised to a cystine. Residue Gly-141 coordinates ATP. An interaction with tRNA region spans residues 175-177 (KDQ). Cys-225 functions as the Cysteine persulfide intermediate in the catalytic mechanism. Residues 330–331 (RY) are interaction with tRNA.

The protein belongs to the MnmA/TRMU family.

It localises to the cytoplasm. It catalyses the reaction S-sulfanyl-L-cysteinyl-[protein] + uridine(34) in tRNA + AH2 + ATP = 2-thiouridine(34) in tRNA + L-cysteinyl-[protein] + A + AMP + diphosphate + H(+). In terms of biological role, catalyzes the 2-thiolation of uridine at the wobble position (U34) of tRNA, leading to the formation of s(2)U34. In Prochlorococcus marinus (strain MIT 9301), this protein is tRNA-specific 2-thiouridylase MnmA.